The following is a 160-amino-acid chain: Putative pre-16S rRNA nuclease (160 aa).

The protein belongs to the YqgF nuclease family.

The protein resides in the cytoplasm. Functionally, could be a nuclease involved in processing of the 5'-end of pre-16S rRNA. In Chelativorans sp. (strain BNC1), this protein is Putative pre-16S rRNA nuclease.